A 73-amino-acid chain; its full sequence is Stigmurin (73 aa).

The N-terminal stretch at 1-22 is a signal peptide; it reads MQIKHLITLFFLVLIVADQCSA. The residue at position 39 (K39) is a Lysine amide. A propeptide spanning residues 45-73 is cleaved from the precursor; sequence EISAQIEQYKDLQKREAELEKLLDRLPMY.

Belongs to the non-disulfide-bridged peptide (NDBP) superfamily. Short antimicrobial peptide (group 4) family. As to expression, expressed by the venom gland.

It is found in the secreted. Antimicrobial peptide with activity against Gram-positive bacterial strains (S.aureus (MIC=2-140 uM), methicillin-resistant S.aureus (MRSA) (MIC=8-17 uM), S.epidermidis (MIC=1.17 uM), and the yeasts C.albicans, C.krusei, and C.glabrata (MIC=34-69 uM)). Acts by disrupting the cell membrane (observed on outer layer of the S.aureus). Is not active against Gram-negative bacteria (E.coli, E.Cloacae, P.aeruginosa), and the Gram-positive bacterium E.faecalis. Also shows toxicity against several cell lines, but possess low hemolytic activity at the highest concentration tested. Also shows antiparasitic activity against Trypanosoma cruzi by decreasing the viability of the epimastigote and trypomastigote forms of the parasite. Displays high hydroxyl radical scavenging activity (antioxidant action). In a wound infection model, the topical application of this peptide demonstrates antibacterial effects, as well as an ability to accelerate wound closure speed, which suggests the induction of tissue repair. In the model of polymicrobial sepsis, it exhibits an antibiotic effect, reducing the levels of microorganisms in the infectious focus and the inflammatory responses in the lung and cecum of septic animals. This Tityus stigmurus (Brazilian scorpion) protein is Stigmurin.